Reading from the N-terminus, the 209-residue chain is U1 small nuclear ribonucleoprotein C (209 aa).

The Matrin-type zinc finger occupies 4–36 (HYCDYCDVFLTHDSASVRKAHNSGRNHLANVRD). Low complexity predominate over residues 72-87 (PQHLQAPPQGGFAPPM). The interval 72-209 (PQHLQAPPQG…RARMMGPGGR (138 aa)) is disordered. Composition is skewed to pro residues over residues 93–150 (GGFP…PFPP) and 159–191 (PGAP…PTNP).

This sequence belongs to the U1 small nuclear ribonucleoprotein C family. In terms of assembly, U1 snRNP is composed of the 7 core Sm proteins B/B', D1, D2, D3, E, F and G that assemble in a heptameric protein ring on the Sm site of the small nuclear RNA to form the core snRNP, and at least 3 U1 snRNP-specific proteins U1-70K, U1-A and U1-C. U1-C interacts with U1 snRNA and the 5' splice-site region of the pre-mRNA.

It is found in the nucleus. Component of the spliceosomal U1 snRNP, which is essential for recognition of the pre-mRNA 5' splice-site and the subsequent assembly of the spliceosome. U1-C is directly involved in initial 5' splice-site recognition for both constitutive and regulated alternative splicing. The interaction with the 5' splice-site seems to precede base-pairing between the pre-mRNA and the U1 snRNA. Stimulates commitment or early (E) complex formation by stabilizing the base pairing of the 5' end of the U1 snRNA and the 5' splice-site region. In Coprinopsis cinerea (strain Okayama-7 / 130 / ATCC MYA-4618 / FGSC 9003) (Inky cap fungus), this protein is U1 small nuclear ribonucleoprotein C.